A 949-amino-acid chain; its full sequence is Lon protease homolog, mitochondrial (949 aa).

Residues 1 to 65 (MAASTGYVRL…VLPGGVQWRG (65 aa)) constitute a mitochondrion transit peptide. Disordered stretches follow at residues 68 to 94 (DSGNRGGSDETSEGGAEDGATASTGEG) and 213 to 240 (EGLEPEAEKQKSRRKLKRGKKEVEDELG). Positions 112–359 (LPLIAITRNP…KALSLLKKEF (248 aa)) constitute a Lon N-terminal domain. Positions 223–232 (KSRRKLKRGK) are enriched in basic residues. Position 512–519 (512–519 (GPPGVGKT)) interacts with ATP. One can recognise a Lon proteolytic domain in the interval 748 to 938 (VTPPGVVMGL…RDIFPIAFPR (191 aa)). Residues Ser844 and Lys887 contribute to the active site.

It belongs to the peptidase S16 family. As to quaternary structure, homohexamer. Organized in a ring with a central cavity. The ATP-binding and proteolytic domains (AP-domain) form a hexameric chamber, while the N-terminal domain is arranged as a trimer of dimers. DNA and RNA binding is stimulated by substrate and inhibited by ATP binding. Interacts with TWNK and mitochondrial DNA polymerase subunit POLG. Detected in liver &gt; heart &gt; kidney &gt; testis.

The protein resides in the mitochondrion matrix. It catalyses the reaction Hydrolysis of proteins in presence of ATP.. Its function is as follows. ATP-dependent serine protease that mediates the selective degradation of misfolded, unassembled or oxidatively damaged polypeptides as well as certain short-lived regulatory proteins in the mitochondrial matrix. Endogenous substrates include mitochondrial steroidogenic acute regulatory (StAR) protein, DELE1, helicase Twinkle (TWNK) and the large ribosomal subunit protein MRPL32/bL32m. MRPL32/bL32m is protected from degradation by LONP1 when it is bound to a nucleic acid (RNA), but TWNK is not. May also have a chaperone function in the assembly of inner membrane protein complexes. Participates in the regulation of mitochondrial gene expression and in the maintenance of the integrity of the mitochondrial genome. Binds to mitochondrial promoters and RNA in a single-stranded, site-specific, and strand-specific manner. May regulate mitochondrial DNA replication and/or gene expression using site-specific, single-stranded DNA binding to target the degradation of regulatory proteins binding to adjacent sites in mitochondrial promoters. The sequence is that of Lon protease homolog, mitochondrial (Lonp1) from Mus musculus (Mouse).